Here is a 717-residue protein sequence, read N- to C-terminus: Serine/threonine-protein kinase STE11 (717 aa).

In terms of domain architecture, SAM spans 20 to 84; the sequence is NDLPFVQLFL…LRKSKSFQRD (65 aa). Position 323 is a phosphoserine (serine 323). One can recognise a Protein kinase domain in the interval 415–712; the sequence is WLKGACIGSG…ALELLQHPWL (298 aa). ATP contacts are provided by residues 421-429 and lysine 444; that span reads IGSGSFGSV. Polar residues predominate over residues 452–466; that stretch reads NIGVPTDNNKQANSD. The tract at residues 452–481 is disordered; sequence NIGVPTDNNKQANSDENNEQEEQQEKIEDV. Phosphoserine is present on serine 465. The active-site Proton acceptor is the aspartate 579.

Belongs to the protein kinase superfamily. STE Ser/Thr protein kinase family. MAP kinase kinase kinase subfamily. In terms of assembly, homodimer. Interacts (via SAM domain) with STE50 (via SAM domain). Interacts with PBS2 and SHO1.

It carries out the reaction L-seryl-[protein] + ATP = O-phospho-L-seryl-[protein] + ADP + H(+). The enzyme catalyses L-threonyl-[protein] + ATP = O-phospho-L-threonyl-[protein] + ADP + H(+). Functionally, serine/threonine protein kinase required for cell-type-specific transcription and signal transduction in yeast. It is thought that it phosphorylates the STE7 protein kinase which itself, phosphorylates the FUS3 and or KSS1 kinases. In Saccharomyces cerevisiae (strain ATCC 204508 / S288c) (Baker's yeast), this protein is Serine/threonine-protein kinase STE11 (STE11).